The chain runs to 199 residues: Ras-related protein Rab-7b (199 aa).

GTP contacts are provided by residues 15–22, 34–40, 63–67, 124–127, and 154–155; these read GAIGVGKT, YEEYQTT, DTGGQ, NKID, and AK. 2 short sequence motifs (switch) span residues 28–41 and 67–82; these read YVHK…QTTL and QERF…KGSD. Phosphoserine is present on Ser-186. S-geranylgeranyl cysteine attachment occurs at residues Cys-198 and Cys-199.

This sequence belongs to the small GTPase superfamily. Rab family. Expressed in heart, placenta, lung, skeletal muscle and peripheral blood leukocyte.

The protein resides in the late endosome. Its subcellular location is the lysosome. It localises to the golgi apparatus. The protein localises to the trans-Golgi network. It is found in the cytoplasmic vesicle. The protein resides in the phagosome. Its subcellular location is the phagosome membrane. Functionally, controls vesicular trafficking from endosomes to the trans-Golgi network (TGN). Acts as a negative regulator of TLR9 signaling and can suppress TLR9-triggered TNFA, IL6, and IFNB production in macrophages by promoting TLR9 lysosomal degradation. Also negatively regulates TLR4 signaling in macrophages by promoting lysosomal degradation of TLR4. Promotes megakaryocytic differentiation by increasing NF-kappa-B-dependent IL6 production and subsequently enhancing the association of STAT3 with GATA1. Not involved in the regulation of the EGF- and EGFR degradation pathway. This Homo sapiens (Human) protein is Ras-related protein Rab-7b (RAB7B).